A 156-amino-acid chain; its full sequence is Ribosomal RNA large subunit methyltransferase H (156 aa).

S-adenosyl-L-methionine is bound by residues Leu73, Gly104, and 123-128 (LSALTL).

It belongs to the RNA methyltransferase RlmH family. As to quaternary structure, homodimer.

Its subcellular location is the cytoplasm. The catalysed reaction is pseudouridine(1915) in 23S rRNA + S-adenosyl-L-methionine = N(3)-methylpseudouridine(1915) in 23S rRNA + S-adenosyl-L-homocysteine + H(+). Functionally, specifically methylates the pseudouridine at position 1915 (m3Psi1915) in 23S rRNA. In Colwellia psychrerythraea (strain 34H / ATCC BAA-681) (Vibrio psychroerythus), this protein is Ribosomal RNA large subunit methyltransferase H.